A 695-amino-acid polypeptide reads, in one-letter code: Frizzled and smoothened-like protein O (695 aa).

The N-terminal stretch at 1 to 23 (MKKLNYLLIVSFIFILNLLISKS) is a signal peptide. The Extracellular portion of the chain corresponds to 24-233 (QVLIDVTAKC…KEYKTKFYSE (210 aa)). The FZ domain occupies 28–173 (DVTAKCELID…ANEEIQCSGP (146 aa)). Cystine bridges form between cysteine 33/cysteine 96, cysteine 42/cysteine 89, cysteine 80/cysteine 125, cysteine 114/cysteine 170, and cysteine 118/cysteine 138. Asparagine 47 carries an N-linked (GlcNAc...) asparagine glycan. N-linked (GlcNAc...) asparagine glycosylation is found at asparagine 137 and asparagine 178. A helical membrane pass occupies residues 234–254 (AILFSFSTACSFYLIFTFGVF). The Cytoplasmic portion of the chain corresponds to 255–262 (PNKYTNRN). The helical transmembrane segment at 263-283 (WIIVYLGITAICLAISYAVQE) threads the bilayer. The Extracellular portion of the chain corresponds to 284–307 (ARYGGGDWRCTSDPGRYKSSEDGT). Residues 308-328 (CILGGFFFQIGGLGTILFLSL) form a helical membrane-spanning segment. Over 329–343 (YSFDMFLTMNMMTNK) the chain is Cytoplasmic. A helical membrane pass occupies residues 344–364 (YFIQTSVGMWALIIFYALLPI). The Extracellular segment spans residues 365–387 (KHYESSIASAGCWLSNEDNMFWQ). A helical transmembrane segment spans residues 388–408 (YFCFYVPSYVATFFLGVFIIT). At 409–435 (SIYKVFKMTVMFKSIKDKRILLLNIRS) the chain is on the cytoplasmic side. The helical transmembrane segment at 436–456 (IIFLIAIMFCVSFSTMYPLYV) threads the bilayer. The Extracellular portion of the chain corresponds to 457-500 (TYNGDDFSKSVEVYVTCLYANIPNGNEVCPQIVFPQFSLRYMNA). A helical transmembrane segment spans residues 501-521 (ITMAIIGIVGLIGLGIDPHIL). At 522–695 (QIYRESIRFK…NIERINSDNV (174 aa)) the chain is on the cytoplasmic side. The segment covering 545-556 (SPQPLKQGSTTD) has biased composition (polar residues). Residues 545–695 (SPQPLKQGST…NIERINSDNV (151 aa)) are disordered. Positions 593 to 608 (NLSASSESSNNLLNQS) are enriched in low complexity. The span at 609–625 (TPGNLNINESISSIDTS) shows a compositional bias: polar residues. A compositionally biased stretch (low complexity) spans 626–686 (NNNNNNNNNN…NNNNNNNNNN (61 aa)). The stretch at 653–691 (NNNNNNNNNNNNNNNNNNNNYSNNNNNNNNNNNNIERIN) forms a coiled coil.

It belongs to the G-protein coupled receptor Fz/Smo family.

It is found in the membrane. The chain is Frizzled and smoothened-like protein O (fslO) from Dictyostelium discoideum (Social amoeba).